The primary structure comprises 59 residues: Insertion element IS986 uncharacterized 6.6 kDa protein (59 aa).

The tract at residues 1–26 is disordered; it reads MRKWVRQAQVDAGARPGTTTEESAEI.

Belongs to the transposase 8 family.

The polypeptide is Insertion element IS986 uncharacterized 6.6 kDa protein (Mycobacterium tuberculosis).